The following is an 81-amino-acid chain: MNPLIPAASVIAAGLAVGLASIGPGIGQGTAAGQAVEGIARQPEAEGKIRGTLLSSPASMEALTIYGLVVALALSFANPFI.

2 helical membrane passes run 3–23 (PLIPAASVIAAGLAVGLASIG) and 61–81 (EALTIYGLVVALALSFANPFI).

The protein belongs to the ATPase C chain family. As to quaternary structure, F-type ATPases have 2 components, F(1) - the catalytic core - and F(0) - the membrane proton channel. F(1) has five subunits: alpha(3), beta(3), gamma(1), delta(1), epsilon(1). F(0) has four main subunits: a(1), b(1), b'(1) and c(10-14). The alpha and beta chains form an alternating ring which encloses part of the gamma chain. F(1) is attached to F(0) by a central stalk formed by the gamma and epsilon chains, while a peripheral stalk is formed by the delta, b and b' chains.

Its subcellular location is the plastid membrane. Its function is as follows. F(1)F(0) ATP synthase produces ATP from ADP in the presence of a proton or sodium gradient. F-type ATPases consist of two structural domains, F(1) containing the extramembraneous catalytic core and F(0) containing the membrane proton channel, linked together by a central stalk and a peripheral stalk. During catalysis, ATP synthesis in the catalytic domain of F(1) is coupled via a rotary mechanism of the central stalk subunits to proton translocation. Functionally, key component of the F(0) channel; it plays a direct role in translocation across the membrane. A homomeric c-ring of between 10-14 subunits forms the central stalk rotor element with the F(1) delta and epsilon subunits. In Aneura mirabilis (Parasitic liverwort), this protein is ATP synthase subunit C, plastid.